The following is a 280-amino-acid chain: Energy-coupling factor transporter ATP-binding protein EcfA1 (280 aa).

An ABC transporter domain is found at 7–241 (IEVAHLKYEY…GQRLLDLGLD (235 aa)). Position 41–48 (41–48 (GHNGSGKS)) interacts with ATP.

The protein belongs to the ABC transporter superfamily. Energy-coupling factor EcfA family. In terms of assembly, forms a stable energy-coupling factor (ECF) transporter complex composed of 2 membrane-embedded substrate-binding proteins (S component), 2 ATP-binding proteins (A component) and 2 transmembrane proteins (T component).

The protein localises to the cell membrane. Its function is as follows. ATP-binding (A) component of a common energy-coupling factor (ECF) ABC-transporter complex. Unlike classic ABC transporters this ECF transporter provides the energy necessary to transport a number of different substrates. In Latilactobacillus sakei subsp. sakei (strain 23K) (Lactobacillus sakei subsp. sakei), this protein is Energy-coupling factor transporter ATP-binding protein EcfA1.